Reading from the N-terminus, the 304-residue chain is Dihydroorotate dehydrogenase B (NAD(+)), catalytic subunit (304 aa).

Residues Ser20 and 44-45 each bind FMN; that span reads KA. Residues Lys44 and 68–72 each bind substrate; that span reads NAIGL. Asn98 and Asn126 together coordinate FMN. A substrate-binding site is contributed by Asn126. Cys129 serves as the catalytic Nucleophile. Lys164 and Ile190 together coordinate FMN. 191–192 is a binding site for substrate; sequence NT. FMN-binding positions include Gly216, 242 to 243, and 264 to 265; these read GG and GT.

The protein belongs to the dihydroorotate dehydrogenase family. Type 1 subfamily. Heterotetramer of 2 PyrK and 2 PyrD type B subunits. The cofactor is FMN.

The protein resides in the cytoplasm. The catalysed reaction is (S)-dihydroorotate + NAD(+) = orotate + NADH + H(+). It functions in the pathway pyrimidine metabolism; UMP biosynthesis via de novo pathway; orotate from (S)-dihydroorotate (NAD(+) route): step 1/1. In terms of biological role, catalyzes the conversion of dihydroorotate to orotate with NAD(+) as electron acceptor. The protein is Dihydroorotate dehydrogenase B (NAD(+)), catalytic subunit (pyrD) of Oceanobacillus iheyensis (strain DSM 14371 / CIP 107618 / JCM 11309 / KCTC 3954 / HTE831).